We begin with the raw amino-acid sequence, 255 residues long: MPLELVTVPCLSDNYAFLVHDAGTGETSVVDVPEAGPVLKALEERGWHLSQILLTHHHSDHVAGVEELRAATGARVAGAAADAHRLPPLDLELAEGDLVRVGASEGRVIEVPGHTVGHIAFHFPDSSLAFTGDSLMAMGCGRLFEGTAEAMWQSLRKLSALPPETMICSGHEYAASNARFAATLEPDSPMLIFRVGSIAAARKEGRPTVPSHLSDEIATNPFLRAGEASLKAAVGMVDAEDAEVFAEIRRRKDKF.

Residues His56, His58, Asp60, His61, His114, Asp133, and His171 each contribute to the Zn(2+) site.

It belongs to the metallo-beta-lactamase superfamily. Glyoxalase II family. Monomer. It depends on Zn(2+) as a cofactor.

The catalysed reaction is an S-(2-hydroxyacyl)glutathione + H2O = a 2-hydroxy carboxylate + glutathione + H(+). The protein operates within secondary metabolite metabolism; methylglyoxal degradation; (R)-lactate from methylglyoxal: step 2/2. Thiolesterase that catalyzes the hydrolysis of S-D-lactoyl-glutathione to form glutathione and D-lactic acid. The polypeptide is Hydroxyacylglutathione hydrolase (Cereibacter sphaeroides (strain ATCC 17029 / ATH 2.4.9) (Rhodobacter sphaeroides)).